Reading from the N-terminus, the 661-residue chain is 72 kDa type IV collagenase (661 aa).

An N-terminal signal peptide occupies residues 1–30 (MTEARVSRGALAALLRALCALGCLLGRAAA). The propeptide at 31-110 (APSPIIKFPG…PRCGNPDVAN (80 aa)) is activation peptide. A Cysteine switch motif is present at residues 101-108 (PRCGNPDV). Residue cysteine 103 participates in Zn(2+) binding. The segment at 111 to 222 (YNFFPRKPKW…LRTLGEGQVV (112 aa)) is collagenase-like 1. 2 residues coordinate Ca(2+): aspartate 135 and aspartate 169. The Zn(2+) site is built by histidine 179 and aspartate 181. Aspartate 186 and glycine 187 together coordinate Ca(2+). Zn(2+) is bound at residue histidine 194. Residues glycine 201, glycine 203, and aspartate 205 each coordinate Ca(2+). Histidine 207 is a binding site for Zn(2+). Residues aspartate 209, aspartate 210, and glutamate 212 each coordinate Ca(2+). Residues 223 to 397 (RVKYGNADGE…WGFCPDQGYS (175 aa)) form a collagen-binding region. 3 consecutive Fibronectin type-II domains span residues 229 to 277 (ADGE…FCPH), 287 to 335 (ADGQ…FCPE), and 345 to 393 (SEGA…FCPD). Disulfide bonds link cysteine 234–cysteine 260, cysteine 248–cysteine 275, cysteine 292–cysteine 318, cysteine 306–cysteine 333, cysteine 350–cysteine 376, and cysteine 364–cysteine 391. The interval 398–466 (LFLVAAHEFG…GPTPTLGPVT (69 aa)) is collagenase-like 2. Position 404 (histidine 404) interacts with Zn(2+). Glutamate 405 is a catalytic residue. Residues histidine 408 and histidine 414 each coordinate Zn(2+). Positions 415–661 (SQDPGALMAP…GSIKSDWLGC (247 aa)) are required for inhibitor TIMP2 binding. Hemopexin repeat units lie at residues 469 to 517 (LCKQ…WPEL), 518 to 564 (PEKI…GLPP), 566 to 614 (VQKV…WNAI), and 615 to 661 (PDNL…WLGC). Cysteine 470 and cysteine 661 are disulfide-bonded. The Ca(2+) site is built by aspartate 477, aspartate 522, and aspartate 570. The N-linked (GlcNAc...) asparagine glycan is linked to asparagine 574. Aspartate 619 contacts Ca(2+). An N-linked (GlcNAc...) asparagine glycan is attached at asparagine 643.

This sequence belongs to the peptidase M10A family. Interacts (via the C-terminal hemopexin-like domains-containing region) with the integrin alpha-V/beta-3; the interaction promotes vascular invasion in angiogenic vessels and melamoma cells. Interacts (via the C-terminal PEX domain) with TIMP2 (via the C-terminal); the interaction inhibits the degradation activity. Interacts with GSK3B. Requires Ca(2+) as cofactor. The cofactor is Zn(2+). Phosphorylation on multiple sites modulates enzymatic activity. Phosphorylated by PKC in vitro. Post-translationally, the propeptide is processed by MMP14 (MT-MMP1) and MMP16 (MT-MMP3). Autocatalytic cleavage in the C-terminal produces the anti-angiogenic peptide, PEX. This processing appears to be facilitated by binding integrinv/beta3.

It is found in the secreted. The protein resides in the extracellular space. It localises to the extracellular matrix. Its subcellular location is the membrane. The protein localises to the nucleus. The catalysed reaction is Cleavage of gelatin type I and collagen types IV, V, VII, X. Cleaves the collagen-like sequence Pro-Gln-Gly-|-Ile-Ala-Gly-Gln.. Its function is as follows. Ubiquitinous metalloproteinase that is involved in diverse functions such as remodeling of the vasculature, angiogenesis, tissue repair, tumor invasion, inflammation, and atherosclerotic plaque rupture. As well as degrading extracellular matrix proteins, can also act on several nonmatrix proteins such as big endothelial 1 and beta-type CGRP promoting vasoconstriction. Also cleaves KISS at a Gly-|-Leu bond. Appears to have a role in myocardial cell death pathways. Contributes to myocardial oxidative stress by regulating the activity of GSK3beta. Cleaves GSK3beta in vitro. Involved in the formation of the fibrovascular tissues. PEX, the C-terminal non-catalytic fragment of MMP2, possesses anti-angiogenic and anti-tumor properties and inhibits cell migration and cell adhesion to FGF2 and vitronectin. Ligand for integrin alpha-v/beta-3 on the surface of blood vessels. This Bos taurus (Bovine) protein is 72 kDa type IV collagenase (MMP2).